Consider the following 478-residue polypeptide: Lysosome membrane protein 2 (478 aa).

Residues 2-4 (ARC) lie on the Cytoplasmic side of the membrane. Residues 5 to 27 (CFYTAGTLSLLLLVTSVTLLVAR) traverse the membrane as a helical segment. Residues 28–433 (VFQKAVDQTI…QLKSVINTTL (406 aa)) lie on the Lumenal side of the membrane. N-linked (GlcNAc...) asparagine glycosylation is found at asparagine 45, asparagine 68, asparagine 105, and asparagine 122. Positions 155–191 (IIEAMLKAYQQTLFVTHTVHELLWGYKDEVLSLVHIF) are important for interaction with GBA1. N-linked (GlcNAc...) asparagine glycans are attached at residues asparagine 206, asparagine 224, asparagine 249, and asparagine 304. 2 disulfides stabilise this stretch: cysteine 274–cysteine 329 and cysteine 312–cysteine 318. Residues asparagine 325, asparagine 412, and asparagine 430 are each glycosylated (N-linked (GlcNAc...) asparagine). Residues 434-459 (IVTNIPYIIMALGVFFGLIFTWLACR) traverse the membrane as a helical segment. The Cytoplasmic portion of the chain corresponds to 460–478 (GQGSTDEGTADERAPLIRT).

Belongs to the CD36 family. Interacts with GBA1. Acylated by palmitic acid group(s).

The protein resides in the lysosome membrane. Its function is as follows. Acts as a lysosomal receptor for glucosylceramidase (GBA1) targeting. In Rattus norvegicus (Rat), this protein is Lysosome membrane protein 2 (Scarb2).